The primary structure comprises 103 residues: Signal recognition particle 19 kDa protein (103 aa).

Belongs to the SRP19 family. As to quaternary structure, part of the signal recognition particle protein translocation system, which is composed of SRP and FtsY. Archaeal SRP consists of a 7S RNA molecule of 300 nucleotides and two protein subunits: SRP54 and SRP19.

The protein localises to the cytoplasm. In terms of biological role, involved in targeting and insertion of nascent membrane proteins into the cytoplasmic membrane. Binds directly to 7S RNA and mediates binding of the 54 kDa subunit of the SRP. This is Signal recognition particle 19 kDa protein from Hyperthermus butylicus (strain DSM 5456 / JCM 9403 / PLM1-5).